Consider the following 142-residue polypeptide: Large ribosomal subunit protein uL11 (142 aa).

Belongs to the universal ribosomal protein uL11 family. In terms of assembly, part of the ribosomal stalk of the 50S ribosomal subunit. Interacts with L10 and the large rRNA to form the base of the stalk. L10 forms an elongated spine to which L12 dimers bind in a sequential fashion forming a multimeric L10(L12)X complex. In terms of processing, one or more lysine residues are methylated.

Functionally, forms part of the ribosomal stalk which helps the ribosome interact with GTP-bound translation factors. The protein is Large ribosomal subunit protein uL11 of Bartonella tribocorum (strain CIP 105476 / IBS 506).